The sequence spans 356 residues: Alanine racemase (356 aa).

Catalysis depends on K35, which acts as the Proton acceptor; specific for D-alanine. K35 is modified (N6-(pyridoxal phosphate)lysine). R130 lines the substrate pocket. Residue Y253 is the Proton acceptor; specific for L-alanine of the active site. M301 lines the substrate pocket.

It belongs to the alanine racemase family. Requires pyridoxal 5'-phosphate as cofactor.

The catalysed reaction is L-alanine = D-alanine. It functions in the pathway amino-acid biosynthesis; D-alanine biosynthesis; D-alanine from L-alanine: step 1/1. Functionally, catalyzes the interconversion of L-alanine and D-alanine. May also act on other amino acids. This Sodalis glossinidius (strain morsitans) protein is Alanine racemase (alr).